A 324-amino-acid chain; its full sequence is Acetyl-coenzyme A carboxylase carboxyl transferase subunit alpha (324 aa).

In terms of domain architecture, CoA carboxyltransferase C-terminal spans 44–298 (QLEAKATQLR…KTAIVKSLDD (255 aa)).

Belongs to the AccA family. In terms of assembly, acetyl-CoA carboxylase is a heterohexamer composed of biotin carboxyl carrier protein (AccB), biotin carboxylase (AccC) and two subunits each of ACCase subunit alpha (AccA) and ACCase subunit beta (AccD).

It is found in the cytoplasm. The catalysed reaction is N(6)-carboxybiotinyl-L-lysyl-[protein] + acetyl-CoA = N(6)-biotinyl-L-lysyl-[protein] + malonyl-CoA. Its pathway is lipid metabolism; malonyl-CoA biosynthesis; malonyl-CoA from acetyl-CoA: step 1/1. Component of the acetyl coenzyme A carboxylase (ACC) complex. First, biotin carboxylase catalyzes the carboxylation of biotin on its carrier protein (BCCP) and then the CO(2) group is transferred by the carboxyltransferase to acetyl-CoA to form malonyl-CoA. The protein is Acetyl-coenzyme A carboxylase carboxyl transferase subunit alpha of Trichodesmium erythraeum (strain IMS101).